Consider the following 356-residue polypeptide: Cyclin-A1-4 (356 aa).

It belongs to the cyclin family. Cyclin AB subfamily.

In Oryza sativa subsp. japonica (Rice), this protein is Cyclin-A1-4 (CYCA1-4).